Reading from the N-terminus, the 472-residue chain is Uronate isomerase (472 aa).

Belongs to the metallo-dependent hydrolases superfamily. Uronate isomerase family.

The catalysed reaction is D-glucuronate = D-fructuronate. It catalyses the reaction aldehydo-D-galacturonate = keto-D-tagaturonate. Its pathway is carbohydrate metabolism; pentose and glucuronate interconversion. In Oceanobacillus iheyensis (strain DSM 14371 / CIP 107618 / JCM 11309 / KCTC 3954 / HTE831), this protein is Uronate isomerase.